The sequence spans 631 residues: MPRPALSVTSFCHRLGKRERKQSFMGNSGNSWSHTPFPKLELGLGPQPMAPRELPTCSICLERLRDPISLDCGHDFCIRCFSTHRLPGCEPPCCPECRKICKQKRGLRSLGEKMKLLPQRPLPPALQETCPVRAEPLLLVRINASGGLILRMGAINRCLKHPLARDTPVCLLAVLGEQHSGKSFLLNHLLQGLPGLESGEGGRPRGGEASLQGCRWGANGLARGIWMWSHPFLLGKEGKKVAVFLVDTGDAMSPELSRETRIKLCALTTMLSSYQILSTSQELKDTDLDYLEMFVHVAEVMGKHYGMVPIQHLDLLVRDSSHPNKAGQGHVGNIFQRLSGRYPKVQELLQGKRARCCLLPAPGRRRMNQGHASPGDTDDDFRHLLGAYVSDVLSAAPQHAKSRCQGYWNEGRAVARGDRRLLTGQQLAQEIKNLSGWMGRTGPGFTSPDEMAAQLHDLRKVEAAKREFEEYVRQQDVATKRIFSALRVLPDTMRNLLSTQKDAILARHGVALLCKGRDQTLEALEAELQATAKAFMDSYTMRFCGHLAAVGGAVGAGLMGLAGGVVGAGMAAAALAAEAGMVAAGAAVGATGAAVVGGGVGAGLAATVGCMEKEEDERLLEGDREPLLQEE.

Residues C57 to R98 form an RING-type zinc finger. The interval P131 to E631 is interaction with ZBTB16. In terms of domain architecture, GB1/RHD3-type G spans D166–P397. Position 318–319 (R318–D319) interacts with GTP. The next 2 membrane-spanning stretches (helical) occupy residues L547–G567 and G580–V600.

This sequence belongs to the TRAFAC class dynamin-like GTPase superfamily. GB1/RHD3 GTPase family. GB1 subfamily. As to quaternary structure, self-associates. Interacts with SP1 in an oxidative stress-regulated manner. Interacts with SIGMAR1 in an oxidative stress-regulated manner. Interacts with ZBTB16 (via C2H2-type zinc finger domains 1 and 2). Auto-ubiquitinated. Predominantly expressed in brain. Decreased expression in glioma brain tumors as compared to normal brains (at protein level).

The protein localises to the membrane. The protein resides in the cytoplasm. It is found in the nucleus. Its subcellular location is the nuclear body. It localises to the nucleoplasm. The protein localises to the endosome. The protein resides in the cytoplasmic vesicle. It is found in the secretory vesicle. Its subcellular location is the synaptic vesicle. It localises to the postsynaptic density. The protein localises to the perikaryon. The protein resides in the cell projection. It is found in the neuron projection. It catalyses the reaction S-ubiquitinyl-[E2 ubiquitin-conjugating enzyme]-L-cysteine + [acceptor protein]-L-lysine = [E2 ubiquitin-conjugating enzyme]-L-cysteine + N(6)-ubiquitinyl-[acceptor protein]-L-lysine.. It functions in the pathway protein modification; protein ubiquitination. In terms of biological role, E3 ubiquitin-protein ligase that plays an important role in neuronal differentiation, including neurogenesis and gliogenesis, during brain development. During embryonic development initiates neuronal differentiation by inducing cell cycle arrest at the G0/G1 phase through up-regulation of cell-cycle regulatory proteins. Plays a role not only in the fetal period during the development of the nervous system, but also in the adult brain, where it is involved in the maintenance of neural functions and protection of the nervous tissue cells from oxidative stress-induced damage. Exhibits GTPase and E3 ubiquitin-protein ligase activities. Regulates dendritic spine density and synaptic neurotransmission; its ability to hydrolyze GTP is involved in the maintenance of dendritic spine density. This chain is RING finger protein 112 (RNF112), found in Homo sapiens (Human).